The sequence spans 371 residues: Queuine tRNA-ribosyltransferase (371 aa).

Asp-89 acts as the Proton acceptor in catalysis. Substrate contacts are provided by residues 89–93 (DSGGF), Asp-143, Gln-185, and Gly-212. An RNA binding region spans residues 243–249 (GVGKPED). The Nucleophile role is filled by Asp-262. An RNA binding; important for wobble base 34 recognition region spans residues 267-271 (TRNAR). Zn(2+)-binding residues include Cys-300, Cys-302, Cys-305, and His-331.

It belongs to the queuine tRNA-ribosyltransferase family. In terms of assembly, homodimer. Within each dimer, one monomer is responsible for RNA recognition and catalysis, while the other monomer binds to the replacement base PreQ1. Zn(2+) is required as a cofactor.

It catalyses the reaction 7-aminomethyl-7-carbaguanine + guanosine(34) in tRNA = 7-aminomethyl-7-carbaguanosine(34) in tRNA + guanine. It functions in the pathway tRNA modification; tRNA-queuosine biosynthesis. Its function is as follows. Catalyzes the base-exchange of a guanine (G) residue with the queuine precursor 7-aminomethyl-7-deazaguanine (PreQ1) at position 34 (anticodon wobble position) in tRNAs with GU(N) anticodons (tRNA-Asp, -Asn, -His and -Tyr). Catalysis occurs through a double-displacement mechanism. The nucleophile active site attacks the C1' of nucleotide 34 to detach the guanine base from the RNA, forming a covalent enzyme-RNA intermediate. The proton acceptor active site deprotonates the incoming PreQ1, allowing a nucleophilic attack on the C1' of the ribose to form the product. After dissociation, two additional enzymatic reactions on the tRNA convert PreQ1 to queuine (Q), resulting in the hypermodified nucleoside queuosine (7-(((4,5-cis-dihydroxy-2-cyclopenten-1-yl)amino)methyl)-7-deazaguanosine). In Thioalkalivibrio sulfidiphilus (strain HL-EbGR7), this protein is Queuine tRNA-ribosyltransferase.